The following is a 126-amino-acid chain: MAILGLGTDIVEIARIEAVISRSGERLARRVLSDNEWAIWESHQQPVRFLAKRFAVKEAAAKAFGTGIRNGLAFNQFEVFNDELGKPRLRLWGEALTLAEKLGVAHMHVTLADERHYACATVILES.

Asp-9 and Glu-58 together coordinate Mg(2+).

The protein belongs to the P-Pant transferase superfamily. AcpS family. Mg(2+) serves as cofactor.

It localises to the cytoplasm. It carries out the reaction apo-[ACP] + CoA = holo-[ACP] + adenosine 3',5'-bisphosphate + H(+). Functionally, transfers the 4'-phosphopantetheine moiety from coenzyme A to a Ser of acyl-carrier-protein. The sequence is that of Holo-[acyl-carrier-protein] synthase from Salmonella choleraesuis (strain SC-B67).